A 1759-amino-acid chain; its full sequence is Protein TIC 214 (1759 aa).

5 helical membrane passes run 23–45 (VVVG…LFLL), 64–84 (FITG…HLAL), 129–149 (IFFQ…SSIF), 172–192 (IGWI…LICI), and 221–241 (IFVV…PPPF).

This sequence belongs to the TIC214 family. In terms of assembly, part of the Tic complex.

It localises to the plastid. It is found in the chloroplast inner membrane. Involved in protein precursor import into chloroplasts. May be part of an intermediate translocation complex acting as a protein-conducting channel at the inner envelope. This is Protein TIC 214 from Phaseolus vulgaris (Kidney bean).